The primary structure comprises 175 residues: NADH-ubiquinone oxidoreductase chain 6 (175 aa).

Transmembrane regions (helical) follow at residues 1–21 (MMAY…VGFS), 25–45 (SPIY…GIVM), 47–67 (FGGS…MLVV), 87–107 (AAVL…VLYV), 116–136 (VFNF…FGVF), and 149–169 (YGVW…LVIL).

Belongs to the complex I subunit 6 family. Core subunit of respiratory chain NADH dehydrogenase (Complex I) which is composed of 45 different subunits.

The protein localises to the mitochondrion inner membrane. The enzyme catalyses a ubiquinone + NADH + 5 H(+)(in) = a ubiquinol + NAD(+) + 4 H(+)(out). Its function is as follows. Core subunit of the mitochondrial membrane respiratory chain NADH dehydrogenase (Complex I) which catalyzes electron transfer from NADH through the respiratory chain, using ubiquinone as an electron acceptor. Essential for the catalytic activity and assembly of complex I. This Ceratotherium simum (White rhinoceros) protein is NADH-ubiquinone oxidoreductase chain 6 (MT-ND6).